The chain runs to 199 residues: Proteasome subunit beta 2 (199 aa).

A propeptide spans 1 to 6 (MEKKTG) (removed in mature form; by autocatalysis). The Nucleophile role is filled by threonine 7.

The protein belongs to the peptidase T1B family. The 20S proteasome core is composed of 14 alpha and 14 beta subunits that assemble into four stacked heptameric rings, resulting in a barrel-shaped structure. The two inner rings, each composed of seven catalytic beta subunits, are sandwiched by two outer rings, each composed of seven alpha subunits. The catalytic chamber with the active sites is on the inside of the barrel. Has a gated structure, the ends of the cylinder being occluded by the N-termini of the alpha-subunits. Is capped at one or both ends by the proteasome regulatory ATPase, PAN.

Its subcellular location is the cytoplasm. It carries out the reaction Cleavage of peptide bonds with very broad specificity.. Its activity is regulated as follows. The formation of the proteasomal ATPase PAN-20S proteasome complex, via the docking of the C-termini of PAN into the intersubunit pockets in the alpha-rings, triggers opening of the gate for substrate entry. Interconversion between the open-gate and close-gate conformations leads to a dynamic regulation of the 20S proteasome proteolysis activity. Functionally, component of the proteasome core, a large protease complex with broad specificity involved in protein degradation. In Thermococcus kodakarensis (strain ATCC BAA-918 / JCM 12380 / KOD1) (Pyrococcus kodakaraensis (strain KOD1)), this protein is Proteasome subunit beta 2.